Reading from the N-terminus, the 237-residue chain is Ribosomal RNA small subunit methyltransferase G (237 aa).

S-adenosyl-L-methionine-binding positions include glycine 78, phenylalanine 83, alanine 129–glutamate 130, and arginine 148.

This sequence belongs to the methyltransferase superfamily. RNA methyltransferase RsmG family.

The protein resides in the cytoplasm. Its function is as follows. Specifically methylates the N7 position of a guanine in 16S rRNA. The polypeptide is Ribosomal RNA small subunit methyltransferase G (Streptococcus pyogenes serotype M4 (strain MGAS10750)).